The primary structure comprises 399 residues: Phosphoglycerate kinase (399 aa).

Residues 22-24 (DLN), Arg37, 60-63 (HFGR), Arg119, and Arg152 contribute to the substrate site. Residues Lys202, Glu324, and 354–357 (GGDT) contribute to the ATP site.

The protein belongs to the phosphoglycerate kinase family. As to quaternary structure, monomer.

The protein resides in the cytoplasm. It carries out the reaction (2R)-3-phosphoglycerate + ATP = (2R)-3-phospho-glyceroyl phosphate + ADP. It functions in the pathway carbohydrate degradation; glycolysis; pyruvate from D-glyceraldehyde 3-phosphate: step 2/5. The polypeptide is Phosphoglycerate kinase (Sinorhizobium medicae (strain WSM419) (Ensifer medicae)).